We begin with the raw amino-acid sequence, 27 residues long: Potassium channel toxin alpha-KTx 9.11 (27 aa).

3 disulfides stabilise this stretch: Cys-3–Cys-19, Cys-6–Cys-23, and Cys-10–Cys-25.

It belongs to the short scorpion toxin superfamily. Potassium channel inhibitor family. Alpha-KTx 09 subfamily. As to expression, expressed by the venom gland.

It is found in the secreted. Functionally, may play a role in blocking voltage-gated potassium channels Kv1.2/KCNA2, Kv1.3/KCNA3 and Kv1.6/KCNA6 to a lesser extent. The protein is Potassium channel toxin alpha-KTx 9.11 of Mesobuthus gibbosus (Mediterranean checkered scorpion).